A 362-amino-acid polypeptide reads, in one-letter code: Peptide chain release factor 1 (362 aa).

The residue at position 237 (Gln-237) is an N5-methylglutamine. Positions 284–295 are enriched in basic and acidic residues; the sequence is EEEKRQAEETST. Residues 284 to 304 form a disordered region; sequence EEEKRQAEETSTRRNLVASGD.

It belongs to the prokaryotic/mitochondrial release factor family. Post-translationally, methylated by PrmC. Methylation increases the termination efficiency of RF1.

The protein localises to the cytoplasm. In terms of biological role, peptide chain release factor 1 directs the termination of translation in response to the peptide chain termination codons UAG and UAA. This is Peptide chain release factor 1 from Pseudoalteromonas atlantica (strain T6c / ATCC BAA-1087).